Here is a 611-residue protein sequence, read N- to C-terminus: Urease subunit alpha 2 (611 aa).

In terms of domain architecture, Urease spans 154–611 (GGIDSHIHFI…LPMAQRYFLF (458 aa)). H159, H161, and K242 together coordinate Ni(2+). K242 is subject to N6-carboxylysine. H244 lines the substrate pocket. H271 and H297 together coordinate Ni(2+). Catalysis depends on H345, which acts as the Proton donor. A Ni(2+)-binding site is contributed by D385. A disordered region spans residues 411 to 434 (GHLAPDQSAKTEQSLDNIMLSPTD). The span at 418–434 (SAKTEQSLDNIMLSPTD) shows a compositional bias: polar residues.

Belongs to the metallo-dependent hydrolases superfamily. Urease alpha subunit family. As to quaternary structure, heterotrimer of UreA (gamma), UreB (beta) and UreC (alpha) subunits. Three heterotrimers associate to form the active enzyme. It depends on Ni cation as a cofactor. In terms of processing, carboxylation allows a single lysine to coordinate two nickel ions.

Its subcellular location is the cytoplasm. The enzyme catalyses urea + 2 H2O + H(+) = hydrogencarbonate + 2 NH4(+). It functions in the pathway nitrogen metabolism; urea degradation; CO(2) and NH(3) from urea (urease route): step 1/1. The chain is Urease subunit alpha 2 from Psychrobacter cryohalolentis (strain ATCC BAA-1226 / DSM 17306 / VKM B-2378 / K5).